Consider the following 748-residue polypeptide: Acyl-coenzyme A oxidase (748 aa).

The protein belongs to the acyl-CoA oxidase family. The cofactor is FAD.

It localises to the peroxisome. It catalyses the reaction a 2,3-saturated acyl-CoA + O2 = a (2E)-enoyl-CoA + H2O2. It functions in the pathway lipid metabolism; peroxisomal fatty acid beta-oxidation. The protein is Acyl-coenzyme A oxidase (POX1) of Candida glabrata (strain ATCC 2001 / BCRC 20586 / JCM 3761 / NBRC 0622 / NRRL Y-65 / CBS 138) (Yeast).